Reading from the N-terminus, the 365-residue chain is Peptide chain release factor 2 (365 aa).

Gln252 is modified (N5-methylglutamine).

It belongs to the prokaryotic/mitochondrial release factor family. Post-translationally, methylated by PrmC. Methylation increases the termination efficiency of RF2.

Its subcellular location is the cytoplasm. Its function is as follows. Peptide chain release factor 2 directs the termination of translation in response to the peptide chain termination codons UGA and UAA. This is Peptide chain release factor 2 from Aliivibrio fischeri (strain ATCC 700601 / ES114) (Vibrio fischeri).